Here is a 916-residue protein sequence, read N- to C-terminus: Chitin synthase B (916 aa).

Disordered regions lie at residues 1–75 and 118–141; these read MAYH…GYSL and ARSE…GGNG. Residues 14 to 26 show a composition bias toward basic and acidic residues; sequence HTYDDGHQLRDLS. Polar residues predominate over residues 59–75; it reads RGLTASPVQRPTSGYSL. 7 helical membrane-spanning segments follow: residues 544–561, 588–608, 629–649, 664–684, 716–736, 845–865, and 884–904; these read RWLN…MHFG, FLTW…MDLV, IINT…FILA, SFVA…YLVV, IIII…FMYL, LVTL…SEGL, and ALLW…TWFL.

Belongs to the chitin synthase family. Class III subfamily. Interacts with kibesin kinA. Post-translationally, activity requires trypsin activation, suggesting a zymogenic nature. Phosphorylated at yet unidentified residues in a N-terminal disordered region-dependent manner.

The protein resides in the cell membrane. It localises to the cell tip. The protein localises to the cell septum. The catalysed reaction is [(1-&gt;4)-N-acetyl-beta-D-glucosaminyl](n) + UDP-N-acetyl-alpha-D-glucosamine = [(1-&gt;4)-N-acetyl-beta-D-glucosaminyl](n+1) + UDP + H(+). With respect to regulation, activity is stimulated by Mg(2+) and is inhibited by polyoxin D. In terms of biological role, polymerizes chitin, a structural polymer of the cell wall and septum, by transferring the sugar moiety of UDP-GlcNAc to the non-reducing end of the growing chitin polymer. Does not substantially contribute to the rigidity of the cell wall but is necessary for normal hyphal growth and organization. In addition to its functions in the formation of normal cell walls of hyphae, is also involved in conidiophore and conidia development. The polypeptide is Chitin synthase B (Emericella nidulans (strain FGSC A4 / ATCC 38163 / CBS 112.46 / NRRL 194 / M139) (Aspergillus nidulans)).